Reading from the N-terminus, the 311-residue chain is Aspartate carbamoyltransferase catalytic subunit (311 aa).

Carbamoyl phosphate-binding residues include R55 and T56. K85 provides a ligand contact to L-aspartate. R106, H135, and Q138 together coordinate carbamoyl phosphate. Residues R168 and R230 each coordinate L-aspartate. Carbamoyl phosphate is bound by residues L268 and P269.

This sequence belongs to the aspartate/ornithine carbamoyltransferase superfamily. ATCase family. In terms of assembly, heterododecamer (2C3:3R2) of six catalytic PyrB chains organized as two trimers (C3), and six regulatory PyrI chains organized as three dimers (R2).

It catalyses the reaction carbamoyl phosphate + L-aspartate = N-carbamoyl-L-aspartate + phosphate + H(+). It participates in pyrimidine metabolism; UMP biosynthesis via de novo pathway; (S)-dihydroorotate from bicarbonate: step 2/3. Catalyzes the condensation of carbamoyl phosphate and aspartate to form carbamoyl aspartate and inorganic phosphate, the committed step in the de novo pyrimidine nucleotide biosynthesis pathway. This is Aspartate carbamoyltransferase catalytic subunit from Yersinia pestis.